A 129-amino-acid chain; its full sequence is Small ribosomal subunit protein uS11 (129 aa).

The protein belongs to the universal ribosomal protein uS11 family. Part of the 30S ribosomal subunit. Interacts with proteins S7 and S18. Binds to IF-3.

Functionally, located on the platform of the 30S subunit, it bridges several disparate RNA helices of the 16S rRNA. Forms part of the Shine-Dalgarno cleft in the 70S ribosome. In Actinobacillus succinogenes (strain ATCC 55618 / DSM 22257 / CCUG 43843 / 130Z), this protein is Small ribosomal subunit protein uS11.